The following is a 266-amino-acid chain: Undecaprenyl-diphosphatase (266 aa).

Helical transmembrane passes span 41-61 (NLAF…VILW), 82-102 (YVIN…FFKD), 106-126 (AIFG…AALL), 140-160 (ISMK…LPGL), 180-200 (LAQF…LLDG), 213-233 (IPTL…CLAC), and 245-265 (LIYF…VSQL).

Belongs to the UppP family.

The protein localises to the cell inner membrane. The catalysed reaction is di-trans,octa-cis-undecaprenyl diphosphate + H2O = di-trans,octa-cis-undecaprenyl phosphate + phosphate + H(+). Catalyzes the dephosphorylation of undecaprenyl diphosphate (UPP). Confers resistance to bacitracin. The chain is Undecaprenyl-diphosphatase from Bacteroides fragilis (strain ATCC 25285 / DSM 2151 / CCUG 4856 / JCM 11019 / LMG 10263 / NCTC 9343 / Onslow / VPI 2553 / EN-2).